A 298-amino-acid chain; its full sequence is Cytosolic Fe-S cluster assembly factor CFD1 (298 aa).

Residue 25–32 coordinates ATP; sequence GKGGVGKS. [4Fe-4S] cluster is bound by residues cysteine 215 and cysteine 218.

It belongs to the Mrp/NBP35 ATP-binding proteins family. NUBP2/CFD1 subfamily. As to quaternary structure, heterotetramer of 2 NBP35 and 2 CFD1 chains. It depends on [4Fe-4S] cluster as a cofactor.

It localises to the cytoplasm. In terms of biological role, component of the cytosolic iron-sulfur (Fe/S) protein assembly (CIA) machinery. Required for maturation of extramitochondrial Fe-S proteins. The NBP35-CFD1 heterotetramer forms a Fe-S scaffold complex, mediating the de novo assembly of an Fe-S cluster and its transfer to target apoproteins. Required for biogenesis and export of both ribosomal subunits, which may reflect a role in assembly of the Fe/S clusters in RLI1, a protein which performs rRNA processing and ribosome export. The polypeptide is Cytosolic Fe-S cluster assembly factor CFD1 (Debaryomyces hansenii (strain ATCC 36239 / CBS 767 / BCRC 21394 / JCM 1990 / NBRC 0083 / IGC 2968) (Yeast)).